A 271-amino-acid chain; its full sequence is 2,3,4,5-tetrahydropyridine-2,6-dicarboxylate N-succinyltransferase (271 aa).

Substrate contacts are provided by Arg-102 and Asp-139.

This sequence belongs to the transferase hexapeptide repeat family. Homotrimer.

The protein resides in the cytoplasm. The enzyme catalyses (S)-2,3,4,5-tetrahydrodipicolinate + succinyl-CoA + H2O = (S)-2-succinylamino-6-oxoheptanedioate + CoA. It functions in the pathway amino-acid biosynthesis; L-lysine biosynthesis via DAP pathway; LL-2,6-diaminopimelate from (S)-tetrahydrodipicolinate (succinylase route): step 1/3. The polypeptide is 2,3,4,5-tetrahydropyridine-2,6-dicarboxylate N-succinyltransferase (Coxiella burnetii (strain RSA 331 / Henzerling II)).